The following is a 118-amino-acid chain: MTSYTFSRELRLLTPAQFKSVFSNPIKASSAEITLLAIPNIEQHPRLGLTVAKRFVKRANQRNRIKRVIRESFRLNQHDIPALDIVVLVRNGVMEMENADLNKLIEKLWRKLSRRYNG.

This sequence belongs to the RnpA family. As to quaternary structure, consists of a catalytic RNA component (M1 or rnpB) and a protein subunit.

The enzyme catalyses Endonucleolytic cleavage of RNA, removing 5'-extranucleotides from tRNA precursor.. In terms of biological role, RNaseP catalyzes the removal of the 5'-leader sequence from pre-tRNA to produce the mature 5'-terminus. It can also cleave other RNA substrates such as 4.5S RNA. The protein component plays an auxiliary but essential role in vivo by binding to the 5'-leader sequence and broadening the substrate specificity of the ribozyme. This Shewanella denitrificans (strain OS217 / ATCC BAA-1090 / DSM 15013) protein is Ribonuclease P protein component.